We begin with the raw amino-acid sequence, 205 residues long: UPF0316 protein Cthe_2213 (205 aa).

Helical transmembrane passes span 15-37 (LPLL…IIFV), 44-64 (LAPV…SQIM), and 70-90 (FVCY…GIII).

The protein belongs to the UPF0316 family.

It localises to the cell membrane. The sequence is that of UPF0316 protein Cthe_2213 from Acetivibrio thermocellus (strain ATCC 27405 / DSM 1237 / JCM 9322 / NBRC 103400 / NCIMB 10682 / NRRL B-4536 / VPI 7372) (Clostridium thermocellum).